The primary structure comprises 226 residues: Ribose-5-phosphate isomerase A (226 aa).

Substrate contacts are provided by residues Thr32–Thr35, Asp85–Asp88, and Lys98–Gly101. Glu107 serves as the catalytic Proton acceptor. Lys125 lines the substrate pocket.

It belongs to the ribose 5-phosphate isomerase family. As to quaternary structure, homodimer.

It catalyses the reaction aldehydo-D-ribose 5-phosphate = D-ribulose 5-phosphate. The protein operates within carbohydrate degradation; pentose phosphate pathway; D-ribose 5-phosphate from D-ribulose 5-phosphate (non-oxidative stage): step 1/1. In terms of biological role, catalyzes the reversible conversion of ribose-5-phosphate to ribulose 5-phosphate. The chain is Ribose-5-phosphate isomerase A from Saccharophagus degradans (strain 2-40 / ATCC 43961 / DSM 17024).